A 361-amino-acid polypeptide reads, in one-letter code: Chitin synthase export chaperone (361 aa).

7 consecutive transmembrane segments (helical) span residues 48-68, 86-106, 119-139, 150-170, 184-204, 218-238, and 250-270; these read IIFQ…ATIM, LFFY…SAII, IYAG…FVGF, LWFL…IPVA, TVGL…IYFI, WVIG…LLLV, and HYVD…MMVY.

Belongs to the CHS7 family. As to quaternary structure, interacts with CHS3.

Its subcellular location is the endoplasmic reticulum membrane. Chaperone required for the export of the chitin synthase CHS3 from the endoplasmic reticulum. The protein is Chitin synthase export chaperone (CHS7) of Cryptococcus neoformans var. neoformans serotype D (strain JEC21 / ATCC MYA-565) (Filobasidiella neoformans).